Here is a 452-residue protein sequence, read N- to C-terminus: uncharacterized protein (452 aa).

ATP is bound at residue 72–79; the sequence is GPPGSGKT.

The protein belongs to the AAA ATPase family. RarA/MGS1/WRNIP1 subfamily.

This is an uncharacterized protein from Mycobacterium tuberculosis (strain ATCC 25618 / H37Rv).